Consider the following 747-residue polypeptide: Myotubularin-related protein 12 (747 aa).

A Myotubularin phosphatase domain is found at 205–643 (FDTLKDWCWE…PEIKVWAQRY (439 aa)). An interaction with MTM1 region spans residues 449–558 (VPVFLLFLDC…KGQRKGMRFK (110 aa)). Phosphoserine is present on residues S564, S601, and S716.

The protein belongs to the protein-tyrosine phosphatase family. Non-receptor class myotubularin subfamily. In terms of assembly, heterodimer with lipid phosphatase MTM1. Heterodimer with lipid phosphatase MTMR2. Expressed in skeletal muscles (at protein level). Ubiquitous with prominent expression in brain, heart, kidney, placenta, and lung.

It localises to the cytoplasm. Its subcellular location is the sarcoplasmic reticulum. The protein localises to the myofibril. The protein resides in the sarcomere. In terms of biological role, acts as an adapter for the myotubularin-related phosphatases. Regulates phosphatase MTM1 protein stability and possibly its intracellular location. By stabilizing MTM1 protein levels, required for skeletal muscle maintenance but not for myogenesis. This is Myotubularin-related protein 12 (MTMR12) from Homo sapiens (Human).